Consider the following 419-residue polypeptide: Putative Bro-N domain-containing protein 201R (419 aa).

Residues 4–136 form the Bro-N domain; it reads LINLKDCKEY…KILPSIRKYG (133 aa). Residues 150–195 are a coiled coil; it reads QLALKDKSEEELQIKLQEERIEKENAYMKLRSEAKRHKEQIKRTLE.

This sequence belongs to the IIV-6 201R/289L family.

The chain is Putative Bro-N domain-containing protein 201R from Acheta domesticus (House cricket).